A 715-amino-acid polypeptide reads, in one-letter code: Harpin secretion protein HrpI (715 aa).

Helical transmembrane passes span G23–I43, V45–P65, A69–I89, G115–I135, A203–L223, I241–I261, and M298–I318.

Belongs to the FHIPEP (flagella/HR/invasion proteins export pore) family.

The protein localises to the cell inner membrane. Involved in the secretion of harpin; a proteinaceous elicitor of the hypersensitivity response in plants. In Erwinia amylovora (Fire blight bacteria), this protein is Harpin secretion protein HrpI (hrpI).